Here is a 633-residue protein sequence, read N- to C-terminus: tRNA uridine 5-carboxymethylaminomethyl modification enzyme MnmG (633 aa).

Residues 15-20 (GAGHAG), V127, and S182 contribute to the FAD site. 276-290 (GPRYCPSIEDKIVRF) contacts NAD(+). FAD is bound at residue Q373.

This sequence belongs to the MnmG family. In terms of assembly, homodimer. Heterotetramer of two MnmE and two MnmG subunits. FAD serves as cofactor.

The protein localises to the cytoplasm. NAD-binding protein involved in the addition of a carboxymethylaminomethyl (cmnm) group at the wobble position (U34) of certain tRNAs, forming tRNA-cmnm(5)s(2)U34. The chain is tRNA uridine 5-carboxymethylaminomethyl modification enzyme MnmG from Streptococcus thermophilus (strain CNRZ 1066).